Reading from the N-terminus, the 49-residue chain is Delta-actitoxin-Axm1h (49 aa).

3 disulfide bridges follow: Cys4-Cys46, Cys6-Cys36, and Cys29-Cys47.

This sequence belongs to the sea anemone sodium channel inhibitory toxin family. Type I subfamily.

The protein localises to the secreted. The protein resides in the nematocyst. Binds specifically to voltage-gated sodium channels (Nav) (site 3), thereby delaying their inactivation during signal transduction. Thus it may strongly stimulate mammalian cardiac muscle contraction. This Anthopleura xanthogrammica (Giant green sea anemone) protein is Delta-actitoxin-Axm1h.